Reading from the N-terminus, the 187-residue chain is Ribose 1,5-bisphosphate phosphokinase PhnN (187 aa).

9-16 is an ATP binding site; that stretch reads GPSGSGKD.

It belongs to the ribose 1,5-bisphosphokinase family.

It carries out the reaction alpha-D-ribose 1,5-bisphosphate + ATP = 5-phospho-alpha-D-ribose 1-diphosphate + ADP. Its pathway is metabolic intermediate biosynthesis; 5-phospho-alpha-D-ribose 1-diphosphate biosynthesis; 5-phospho-alpha-D-ribose 1-diphosphate from D-ribose 5-phosphate (route II): step 3/3. In terms of biological role, catalyzes the phosphorylation of ribose 1,5-bisphosphate to 5-phospho-D-ribosyl alpha-1-diphosphate (PRPP). This chain is Ribose 1,5-bisphosphate phosphokinase PhnN, found in Desulfomicrobium baculatum (strain DSM 4028 / VKM B-1378 / X) (Desulfovibrio baculatus).